The following is a 498-amino-acid chain: Glycerol kinase (498 aa).

Thr-12 lines the ADP pocket. Residues Thr-12, Thr-13, and Ser-14 each coordinate ATP. Residue Thr-12 coordinates sn-glycerol 3-phosphate. Arg-16 is a binding site for ADP. Sn-glycerol 3-phosphate-binding residues include Arg-82, Glu-83, Tyr-134, and Asp-243. Glycerol is bound by residues Arg-82, Glu-83, Tyr-134, Asp-243, and Gln-244. ADP is bound by residues Thr-265 and Gly-308. ATP contacts are provided by Thr-265, Gly-308, Gln-312, and Gly-409. ADP is bound by residues Gly-409 and Asn-413.

It belongs to the FGGY kinase family.

It catalyses the reaction glycerol + ATP = sn-glycerol 3-phosphate + ADP + H(+). Its pathway is polyol metabolism; glycerol degradation via glycerol kinase pathway; sn-glycerol 3-phosphate from glycerol: step 1/1. Inhibited by fructose 1,6-bisphosphate (FBP). Key enzyme in the regulation of glycerol uptake and metabolism. Catalyzes the phosphorylation of glycerol to yield sn-glycerol 3-phosphate. This chain is Glycerol kinase, found in Petrotoga mobilis (strain DSM 10674 / SJ95).